We begin with the raw amino-acid sequence, 86 residues long: Small nuclear ribonucleoprotein F (86 aa).

The residue at position 2 (S2) is an N-acetylserine. The region spanning 6-78 (NPKPFLNGLT…VLYIRGVEEE (73 aa)) is the Sm domain.

Belongs to the snRNP Sm proteins family. SmF/LSm6 subfamily. As to quaternary structure, core component of the spliceosomal U1, U2, U4 and U5 small nuclear ribonucleoproteins (snRNPs), the building blocks of the spliceosome. Most spliceosomal snRNPs contain a common set of Sm proteins, SNRPB, SNRPD1, SNRPD2, SNRPD3, SNRPE, SNRPF and SNRPG that assemble in a heptameric protein ring on the Sm site of the small nuclear RNA to form the core snRNP. Component of the U1 snRNP. The U1 snRNP is composed of the U1 snRNA and the 7 core Sm proteins SNRPB, SNRPD1, SNRPD2, SNRPD3, SNRPE, SNRPF and SNRPG, and at least three U1 snRNP-specific proteins SNRNP70/U1-70K, SNRPA/U1-A and SNRPC/U1-C. Component of the U4/U6-U5 tri-snRNP complex composed of the U4, U6 and U5 snRNAs and at least PRPF3, PRPF4, PRPF6, PRPF8, PRPF31, SNRNP200, TXNL4A, SNRNP40, SNRPB, SNRPD1, SNRPD2, SNRPD3, SNRPE, SNRPF, SNRPG, DDX23, CD2BP2, PPIH, SNU13, EFTUD2, SART1 and USP39, plus LSM2, LSM3, LSM4, LSM5, LSM6, LSM7 and LSM8. Component of the U7 snRNP complex, or U7 Sm protein core complex, that is composed of the U7 snRNA and at least LSM10, LSM11, SNRPB, SNRPD3, SNRPE, SNRPF and SNRPG; the complex does not contain SNRPD1 and SNRPD2. Component of the minor spliceosome, which splices U12-type introns. Part of the SMN-Sm complex that contains SMN1, GEMIN2/SIP1, DDX20/GEMIN3, GEMIN4, GEMIN5, GEMIN6, GEMIN7, GEMIN8, STRAP/UNRIP and the Sm proteins SNRPB, SNRPD1, SNRPD2, SNRPD3, SNRPE, SNRPF and SNRPG; catalyzes core snRNPs assembly. Forms a 6S pICln-Sm complex composed of CLNS1A/pICln, SNRPD1, SNRPD2, SNRPE, SNRPF and SNRPG; ring-like structure where CLNS1A/pICln mimics additional Sm proteins and which is unable to assemble into the core snRNP. Interacts with GEMIN2 (via N-terminus); the interaction is direct. Interacts with SNRPD2; the interaction is direct. Interacts with SNRPE; the interaction is direct.

The protein localises to the cytoplasm. The protein resides in the cytosol. Its subcellular location is the nucleus. Its function is as follows. Plays a role in pre-mRNA splicing as a core component of the spliceosomal U1, U2, U4 and U5 small nuclear ribonucleoproteins (snRNPs), the building blocks of the spliceosome. Component of both the pre-catalytic spliceosome B complex and activated spliceosome C complexes. As a component of the minor spliceosome, involved in the splicing of U12-type introns in pre-mRNAs. As part of the U7 snRNP it is involved in histone 3'-end processing. The polypeptide is Small nuclear ribonucleoprotein F (SNRPF) (Homo sapiens (Human)).